Here is a 166-residue protein sequence, read N- to C-terminus: Cyclic pyranopterin monophosphate synthase (166 aa).

Substrate-binding positions include 83–85 and 121–122; these read LCH and ME. Asp136 is an active-site residue.

This sequence belongs to the MoaC family. As to quaternary structure, homohexamer; trimer of dimers.

The enzyme catalyses (8S)-3',8-cyclo-7,8-dihydroguanosine 5'-triphosphate = cyclic pyranopterin phosphate + diphosphate. It functions in the pathway cofactor biosynthesis; molybdopterin biosynthesis. Catalyzes the conversion of (8S)-3',8-cyclo-7,8-dihydroguanosine 5'-triphosphate to cyclic pyranopterin monophosphate (cPMP). This is Cyclic pyranopterin monophosphate synthase from Rhodospirillum rubrum (strain ATCC 11170 / ATH 1.1.1 / DSM 467 / LMG 4362 / NCIMB 8255 / S1).